Here is a 389-residue protein sequence, read N- to C-terminus: Equilibrative nucleotide transporter 8 (389 aa).

10 helical membrane passes run 19–39, 57–77, 87–107, 119–139, 150–170, 187–207, 238–258, 266–286, 331–351, and 367–387; these read VAYV…NALI, TFTV…MTWN, NLGF…DWVW, LMVG…GSLI, MQAI…LRIA, HSYF…CNVL, WPAS…PGFI, LLQS…DFVG, VVVL…VLMI, and IFMV…GWLW.

This sequence belongs to the SLC29A/ENT transporter (TC 2.A.57) family. As to expression, expressed in stems, flowers and siliques.

The protein resides in the cell membrane. In terms of biological role, may be involved in nucleoside transport. The polypeptide is Equilibrative nucleotide transporter 8 (ETN8) (Arabidopsis thaliana (Mouse-ear cress)).